The following is a 314-amino-acid chain: Putative integrase/recombinase y4rB (314 aa).

A Core-binding (CB) domain is found at 2 to 79 (STFRQAVQEY…YVRVFARYRA (78 aa)). The Tyr recombinase domain occupies 100–304 (ARPYLYSKED…SPELMKEAMR (205 aa)). Catalysis depends on residues R147, K172, H248, R251, and H282. Y291 acts as the O-(3'-phospho-DNA)-tyrosine intermediate in catalysis.

It belongs to the 'phage' integrase family.

In Sinorhizobium fredii (strain NBRC 101917 / NGR234), this protein is Putative integrase/recombinase y4rB.